Reading from the N-terminus, the 317-residue chain is Beta-ketoacyl-[acyl-carrier-protein] synthase III (317 aa).

Catalysis depends on residues Cys-112 and His-244. An ACP-binding region spans residues 245 to 249; sequence QANIR. Asn-274 is an active-site residue.

It belongs to the thiolase-like superfamily. FabH family. Homodimer.

The protein localises to the cytoplasm. It catalyses the reaction malonyl-[ACP] + acetyl-CoA + H(+) = 3-oxobutanoyl-[ACP] + CO2 + CoA. Its pathway is lipid metabolism; fatty acid biosynthesis. In terms of biological role, catalyzes the condensation reaction of fatty acid synthesis by the addition to an acyl acceptor of two carbons from malonyl-ACP. Catalyzes the first condensation reaction which initiates fatty acid synthesis and may therefore play a role in governing the total rate of fatty acid production. Possesses both acetoacetyl-ACP synthase and acetyl transacylase activities. Its substrate specificity determines the biosynthesis of branched-chain and/or straight-chain of fatty acids. This Rickettsia felis (strain ATCC VR-1525 / URRWXCal2) (Rickettsia azadi) protein is Beta-ketoacyl-[acyl-carrier-protein] synthase III.